Reading from the N-terminus, the 329-residue chain is Calcium homeostasis modulator protein (329 aa).

The Cytoplasmic portion of the chain corresponds to 1 to 14 (MTTSINSVVTVFQN). Residues 15-35 (VFTNHGSTLLNGILIATTVGG) form a helical membrane-spanning segment. The Extracellular portion of the chain corresponds to 36-53 (QSLVRKLTFSCPCAYPLN). Residues 54–74 (IYHSLVFMFGPTAALLLIGIT) traverse the membrane as a helical segment. Residues 75–103 (VNSTTWKLAHGFFFRVRDTRHSWKTTCVS) lie on the Cytoplasmic side of the membrane. A helical membrane pass occupies residues 104-124 (WIEVLIQSSVAPIAWLFVVFL). At 125 to 191 (DGGYYRCYRS…DASYLEAESQ (67 aa)) the chain is on the extracellular side. Residue N148 is glycosylated (N-linked (GlcNAc...) asparagine). A helical membrane pass occupies residues 192 to 212 (IYAWGLLLFSGVAAFLVITCN). Residues 213-329 (RMCDKYTLVQ…QIIVDETKED (117 aa)) are Cytoplasmic-facing.

It belongs to the CALHM family. In terms of tissue distribution, expressed in head and body wall muscles, IL2, ASG, ASI, ASJ, PHA and PHB sensory neurons, and spermatheca.

The protein resides in the cell membrane. Its function is as follows. Pore-forming subunit of a voltage-gated ion channel. Permeable to monovalent cations, divalent cations and anions with selectivity Ca(2+) &gt; Mg(2+) &gt; Na(+) = K(+) &gt; Cl(-). Acts both as a voltage-gated and calcium-activated ion channel. Required for normal locomotion. This is Calcium homeostasis modulator protein from Caenorhabditis elegans.